A 146-amino-acid polypeptide reads, in one-letter code: Mitochondrial DnaJ homolog 2 (146 aa).

The J domain occupies 85–146; it reads EALLILDISA…LERSVLLRKR (62 aa).

As to quaternary structure, interacts with PAM16/TIM16 and is recruited by the PAM complex.

It is found in the mitochondrion inner membrane. Its function is as follows. Plays a role in mitochondrial biogenesis and protein folding. Participates in the translocation of transit peptide-containing proteins from the inner membrane into the mitochondrial matrix in an ATP-dependent manner, probably by stimulating activity of mtHSP70 (SSC1). This chain is Mitochondrial DnaJ homolog 2 (MDJ2), found in Saccharomyces cerevisiae (strain ATCC 204508 / S288c) (Baker's yeast).